A 425-amino-acid polypeptide reads, in one-letter code: Enolase (425 aa).

Gln-163 contacts (2R)-2-phosphoglycerate. The Proton donor role is filled by Glu-205. Residues Asp-242, Glu-285, and Asp-312 each contribute to the Mg(2+) site. (2R)-2-phosphoglycerate is bound by residues Lys-337, Arg-366, Ser-367, and Lys-388. Lys-337 serves as the catalytic Proton acceptor.

It belongs to the enolase family. Mg(2+) serves as cofactor.

Its subcellular location is the cytoplasm. The protein localises to the secreted. It localises to the cell surface. It catalyses the reaction (2R)-2-phosphoglycerate = phosphoenolpyruvate + H2O. It functions in the pathway carbohydrate degradation; glycolysis; pyruvate from D-glyceraldehyde 3-phosphate: step 4/5. In terms of biological role, catalyzes the reversible conversion of 2-phosphoglycerate (2-PG) into phosphoenolpyruvate (PEP). It is essential for the degradation of carbohydrates via glycolysis. This is Enolase from Cereibacter sphaeroides (strain ATCC 17029 / ATH 2.4.9) (Rhodobacter sphaeroides).